A 93-amino-acid polypeptide reads, in one-letter code: Putative septation protein SpoVG (93 aa).

Belongs to the SpoVG family.

Its function is as follows. Could be involved in septation. The protein is Putative septation protein SpoVG of Alkaliphilus oremlandii (strain OhILAs) (Clostridium oremlandii (strain OhILAs)).